Consider the following 124-residue polypeptide: Ribonuclease pancreatic (124 aa).

Over residues 1–13 (KESAAAKFERQHM) the composition is skewed to basic and acidic residues. The tract at residues 1 to 24 (KESAAAKFERQHMDSSTSSASSSN) is disordered. Substrate is bound by residues lysine 7 and arginine 10. Residue histidine 12 is the Proton acceptor of the active site. 4 disulfide bridges follow: cysteine 26–cysteine 84, cysteine 40–cysteine 95, cysteine 58–cysteine 110, and cysteine 65–cysteine 72. Substrate-binding positions include 41–45 (KPVNT), lysine 66, and arginine 85. Histidine 119 serves as the catalytic Proton donor.

This sequence belongs to the pancreatic ribonuclease family. In terms of assembly, monomer. Interacts with and forms tight 1:1 complexes with RNH1. Dimerization of two such complexes may occur. Interaction with RNH1 inhibits this protein. Pancreas.

It is found in the secreted. The enzyme catalyses an [RNA] containing cytidine + H2O = an [RNA]-3'-cytidine-3'-phosphate + a 5'-hydroxy-ribonucleotide-3'-[RNA].. The catalysed reaction is an [RNA] containing uridine + H2O = an [RNA]-3'-uridine-3'-phosphate + a 5'-hydroxy-ribonucleotide-3'-[RNA].. Functionally, endonuclease that catalyzes the cleavage of RNA on the 3' side of pyrimidine nucleotides. Acts on single-stranded and double-stranded RNA. This Connochaetes taurinus (Blue wildebeest) protein is Ribonuclease pancreatic (RNASE1).